A 422-amino-acid polypeptide reads, in one-letter code: Choline monooxygenase, chloroplastic (422 aa).

A chloroplast-targeting transit peptide spans 1–47; the sequence is MMTTLTATVPEFLPPSLKSTRGYFNSHSEFGVSISKFSRRRFHNPTR. Residues 96-203 form the Rieske domain; it reads WQAVGYSDQI…VAVWGPFVLL (108 aa). [2Fe-2S] cluster contacts are provided by Cys-138, His-140, Cys-157, and His-160. 2 residues coordinate Fe cation: His-269 and His-274.

This sequence belongs to the choline monooxygenase family. [2Fe-2S] cluster is required as a cofactor. The cofactor is Fe cation. It depends on Mg(2+) as a cofactor.

The protein localises to the plastid. It is found in the chloroplast stroma. The enzyme catalyses choline + 2 reduced [2Fe-2S]-[ferredoxin] + O2 + 2 H(+) = betaine aldehyde hydrate + 2 oxidized [2Fe-2S]-[ferredoxin] + H2O. The protein operates within amine and polyamine biosynthesis; betaine biosynthesis via choline pathway; betaine aldehyde from choline (monooxygenase route): step 1/1. Catalyzes the first step of the osmoprotectant glycine betaine synthesis. The protein is Choline monooxygenase, chloroplastic of Arabidopsis thaliana (Mouse-ear cress).